An 88-amino-acid polypeptide reads, in one-letter code: U-scoloptoxin(XY)-Er1b (88 aa).

Positions 1 to 24 (MASQVVLSFALVVVLAVFVGQVDS) are cleaved as a signal peptide. The interval 66–88 (RPELSPGALDDSSEEKDNEASLA) is disordered. Positions 79-88 (EEKDNEASLA) are excised as a propeptide.

The protein belongs to the scoloptoxin-XY family. Post-translationally, contains 3 disulfide bonds. As to expression, expressed by the venom gland.

The protein localises to the secreted. The sequence is that of U-scoloptoxin(XY)-Er1b from Ethmostigmus rubripes (Giant centipede).